The following is an 87-amino-acid chain: Putative regulatory protein BCQ_3657 (87 aa).

Belongs to the RemA family.

The chain is Putative regulatory protein BCQ_3657 from Bacillus cereus (strain Q1).